The chain runs to 588 residues: DNA ligase (588 aa).

Glu-250 contacts ATP. The N6-AMP-lysine intermediate role is filled by Lys-252. Positions 257, 272, 302, 342, 417, and 423 each coordinate ATP.

Belongs to the ATP-dependent DNA ligase family. Requires Mg(2+) as cofactor.

It catalyses the reaction ATP + (deoxyribonucleotide)n-3'-hydroxyl + 5'-phospho-(deoxyribonucleotide)m = (deoxyribonucleotide)n+m + AMP + diphosphate.. Its function is as follows. DNA ligase that seals nicks in double-stranded DNA during DNA replication, DNA recombination and DNA repair. In Nitrosopumilus maritimus (strain SCM1), this protein is DNA ligase.